Here is a 261-residue protein sequence, read N- to C-terminus: MNCIIKTESEIKKMKVSGKIAAEVLEMIENYIKPNISTEEINNICHNFIIKKKAVSACLGYHGFPKSICISVNDVVCHGIPNKNQILKSGDIVNIDVTIIKKNYHADTSKMFLVGQTNILSQRLCKIAQESLYKSLNILKPGIPLYKIGEVIQNYVENNNFSVVKEYCGHGIGRAFHEEPYVLHYKNKSHVILEKGMIFTIEPMINAGSHEVKCMKDGWTVKTKDHSLSAQYEHTVLITENGCDILTWQKNEKIPSKFINK.

H78 contacts substrate. A divalent metal cation-binding residues include D96, D107, and H170. H177 contributes to the substrate binding site. A divalent metal cation-binding residues include E202 and E233.

Belongs to the peptidase M24A family. Methionine aminopeptidase type 1 subfamily. In terms of assembly, monomer. It depends on Co(2+) as a cofactor. Zn(2+) is required as a cofactor. Requires Mn(2+) as cofactor. Fe(2+) serves as cofactor.

It catalyses the reaction Release of N-terminal amino acids, preferentially methionine, from peptides and arylamides.. Functionally, removes the N-terminal methionine from nascent proteins. The N-terminal methionine is often cleaved when the second residue in the primary sequence is small and uncharged (Met-Ala-, Cys, Gly, Pro, Ser, Thr, or Val). Requires deformylation of the N(alpha)-formylated initiator methionine before it can be hydrolyzed. This is Methionine aminopeptidase from Buchnera aphidicola subsp. Schizaphis graminum (strain Sg).